Consider the following 149-residue polypeptide: Small ribosomal subunit protein uS15 (149 aa).

The segment covering 1–11 has biased composition (basic and acidic residues); sequence MARMHSRDRGK. The tract at residues 1–25 is disordered; the sequence is MARMHSRDRGKSGSTRPPRVAPPSW.

This sequence belongs to the universal ribosomal protein uS15 family. As to quaternary structure, part of the 30S ribosomal subunit.

This is Small ribosomal subunit protein uS15 from Methanopyrus kandleri (strain AV19 / DSM 6324 / JCM 9639 / NBRC 100938).